Reading from the N-terminus, the 531-residue chain is MSGRGAGGFPLPPLSPGGGAVAAALGAPPPPAGPGMLPGPALRGPGPAGGVGGPGAAAFRPMGPAGPAAQYQRPGMSPGNRMPMAGLQVGPPAGSPFGAAAPLRPGMPPTMMDPFRKRLLVPQAQPPMPAQRRGLKRRKMADKVLPQRIRELVPESQAYMDLLAFERKLDQTIARKRMEIQEAIKKPLTQKRKLRIYISNTFSPSKAEGDSAGTAGTPGGTPAGDKVASWELRVEGKLLDDPSKQKRKFSSFFKSLVIELDKELYGPDNHLVEWHRMPTTQETDGFQVKRPGDLNVKCTLLLMLDHQPPQYKLDPRLARLLGVHTQTRAAIMQALWLYIKHNQLQDGHEREYINCNRYFRQIFSCGRLRFSEIPMKLAGLLQHPDPIVINHVISVDPNDQKKTACYDIDVEVDDPLKAQMSNFLASTTNQQEIASLDVKIHETIESINQLKTQRDFMLSFSTDPQDFIQEWLRSQRRDLKIITDVIGNPEEERRAAFYHQPWAQEAVGRHIFAKVQQRRQELEQVLGIRLT.

Asymmetric dimethylarginine is present on residues Arg-81 and Arg-104. Residue Ser-203 is modified to Phosphoserine. The disordered stretch occupies residues 205–226; it reads SKAEGDSAGTAGTPGGTPAGDK. The residue at position 217 (Thr-217) is a Phosphothreonine. Residue Lys-226 forms a Glycyl lysine isopeptide (Lys-Gly) (interchain with G-Cter in SUMO2) linkage. The SWIB/MDM2 domain occupies 306–383; that stretch reads HQPPQYKLDP…PMKLAGLLQH (78 aa).

This sequence belongs to the SMARCD family. In terms of assembly, component of the multiprotein chromatin-remodeling complexes SWI/SNF: SWI/SNF-A (BAF), SWI/SNF-B (PBAF) and related complexes. The canonical complex contains a catalytic subunit (either SMARCA4/BRG1/BAF190A or SMARCA2/BRM/BAF190B), and at least SMARCE1, ACTL6A/BAF53, SMARCC1/BAF155, SMARCC2/BAF170, and SMARCB1/SNF5/BAF47. Other subunits specific to each of the complexes may also be present permitting several possible combinations developmentally and tissue specific. Component of the BAF complex, which includes at least actin (ACTB), ARID1A/BAF250A, ARID1B/BAF250B, SMARCA2/BRM, SMARCA4/BRG1, ACTL6A/BAF53, ACTL6B/BAF53B, SMARCE1/BAF57, SMARCC1/BAF155, SMARCC2/BAF170, SMARCB1/SNF5/INI1, and one or more SMARCD1/BAF60A, SMARCD2/BAF60B, or SMARCD3/BAF60C. In muscle cells, the BAF complex also contains DPF3. Component of the SWI/SNF-B (PBAF) chromatin remodeling complex, at least composed of SMARCA4/BRG1, SMARCB1/BAF47/SNF5, ACTL6A/BAF53A or ACTL6B/BAF53B, SMARCE1/BAF57, SMARCD1/BAF60A, SMARCD2/BAF60B, perhaps SMARCD3/BAF60C, SMARCC1/BAF155, SMARCC2/BAF170, PBRM1/BAF180, ARID2/BAF200 and actin (ACTB). Interacts with UNKL. Interacts with CEBPE. Post-translationally, ubiquitinated through a signaling process involving RAC1 and the RING finger protein UNKL. As to expression, isoform 2 is expressed in the pancreas.

The protein resides in the nucleus. Its function is as follows. Involved in transcriptional activation and repression of select genes by chromatin remodeling (alteration of DNA-nucleosome topology). Component of SWI/SNF chromatin remodeling complexes that carry out key enzymatic activities, changing chromatin structure by altering DNA-histone contacts within a nucleosome in an ATP-dependent manner. Critical regulator of myeloid differentiation, controlling granulocytopoiesis and the expression of genes involved in neutrophil granule formation. The sequence is that of SWI/SNF-related matrix-associated actin-dependent regulator of chromatin subfamily D member 2 (SMARCD2) from Homo sapiens (Human).